An 84-amino-acid chain; its full sequence is U4-theraphotoxin-Hhn1n (84 aa).

Residues 1-22 (MKVTLIAILTCAAVLVLHTTAA) form the signal peptide. Residues 23 to 47 (EELEESQLMEVGMPDTELAAVDEER) constitute a propeptide that is removed on maturation. Cystine bridges form between C51-C65, C55-C76, and C70-C81.

This sequence belongs to the neurotoxin 12 (Hwtx-2) family. 02 (Hwtx-2) subfamily. In terms of tissue distribution, expressed by the venom gland.

The protein localises to the secreted. Functionally, postsynaptic neurotoxin. This Cyriopagopus hainanus (Chinese bird spider) protein is U4-theraphotoxin-Hhn1n.